Reading from the N-terminus, the 538-residue chain is Cytochrome P450 52A4 (538 aa).

A helical membrane pass occupies residues 27-46 (WYILIPTILLTLNFLSILHT). C485 contributes to the heme binding site.

Belongs to the cytochrome P450 family. Requires heme as cofactor.

It is found in the membrane. Functionally, together with an NADPH cytochrome P450 the enzyme system catalyzes the terminal hydroxylation as the first step in the assimilation of alkanes and fatty acids. This chain is Cytochrome P450 52A4 (CYP52A4), found in Candida maltosa (Yeast).